The following is a 198-amino-acid chain: 3-isopropylmalate dehydratase small subunit (198 aa).

The protein belongs to the LeuD family. LeuD type 1 subfamily. In terms of assembly, heterodimer of LeuC and LeuD.

The enzyme catalyses (2R,3S)-3-isopropylmalate = (2S)-2-isopropylmalate. It participates in amino-acid biosynthesis; L-leucine biosynthesis; L-leucine from 3-methyl-2-oxobutanoate: step 2/4. In terms of biological role, catalyzes the isomerization between 2-isopropylmalate and 3-isopropylmalate, via the formation of 2-isopropylmaleate. The chain is 3-isopropylmalate dehydratase small subunit (leuD) from Mycobacterium bovis (strain ATCC BAA-935 / AF2122/97).